We begin with the raw amino-acid sequence, 706 residues long: Phosphatase and actin regulator 4 (706 aa).

Residues 42–67 (EVLERKISMRKPREELVKRGLLVEVP) form an RPEL 1 repeat. 4 disordered regions span residues 65–123 (EVPE…QPCA), 196–380 (VHPR…HIPV), 385–404 (VPMLTLAPPNTEVEKEQSAS), and 459–579 (LKVP…REEW). Residues 106-121 (DSTGSRPKSGETTVQP) are compositionally biased toward polar residues. Over residues 200 to 211 (HLSEKNSEKYRP) the composition is skewed to basic and acidic residues. Residues 266–276 (DPSTRQQSSVP) are compositionally biased toward polar residues. Pro residues predominate over residues 290 to 299 (KQPPVPPPKP). Acidic residues-rich tracts occupy residues 463–476 (DDDDDDNSLEDESL), 508–523 (QEEEEEEEEGVSDTDS), and 531–541 (EDDEEEEEEET). The span at 563–579 (GPHDSNPEFPQRSREEW) shows a compositional bias: basic and acidic residues. RPEL repeat units lie at residues 588–613 (SQLNRRLSQRPSAEELEQRNILQKNE) and 625–650 (RRLTRKLSQRPTVAELVERKILRFNE).

It belongs to the phosphatase and actin regulator family. As to quaternary structure, binds ppp1ca and actin.

It is found in the cytoplasm. The protein localises to the cell projection. Its subcellular location is the lamellipodium. Functionally, regulator of protein phosphatase 1 (PP1) required for neural tube and optic fissure closure, and enteric neural crest cell (ENCCs) migration during development. Acts as an activator of PP1. During neural tube closure, localizes to the ventral neural tube and activates PP1, leading to down-regulate cell proliferation within cranial neural tissue and the neural retina. Also acts as a regulator of migration of enteric neural crest cells (ENCCs) by activating PP1, leading to repression of the integrin signaling through the rho/rock pathway. In Xenopus tropicalis (Western clawed frog), this protein is Phosphatase and actin regulator 4 (phactr4).